A 104-amino-acid polypeptide reads, in one-letter code: L-rhamnose mutarotase (104 aa).

Position 18 (tyrosine 18) interacts with substrate. The active-site Proton donor is the histidine 22. Substrate contacts are provided by residues tyrosine 41 and 76 to 77; that span reads WW.

This sequence belongs to the rhamnose mutarotase family. In terms of assembly, homodimer.

Its subcellular location is the cytoplasm. It catalyses the reaction alpha-L-rhamnose = beta-L-rhamnose. It participates in carbohydrate metabolism; L-rhamnose metabolism. Its function is as follows. Involved in the anomeric conversion of L-rhamnose. The chain is L-rhamnose mutarotase from Escherichia coli (strain K12 / MC4100 / BW2952).